The following is a 147-amino-acid chain: MKKVVAVVKLQLPAGKATPAPPVGPALGQHGANIMEFVKAFNAATANMGDAIVPVEITIYADRSFTFVTKTPPASYLIRKAAGLEKGAHKPGREKVGRITWEQVLEIAKQKMPDLNTTDLEAAARMIAGSARSMGVEVVGAPEVKDA.

This sequence belongs to the universal ribosomal protein uL11 family. In terms of assembly, part of the ribosomal stalk of the 50S ribosomal subunit. Interacts with L10 and the large rRNA to form the base of the stalk. L10 forms an elongated spine to which L12 dimers bind in a sequential fashion forming a multimeric L10(L12)X complex. In terms of processing, one or more lysine residues are methylated.

Forms part of the ribosomal stalk which helps the ribosome interact with GTP-bound translation factors. The protein is Large ribosomal subunit protein uL11 of Thermus thermophilus (strain ATCC BAA-163 / DSM 7039 / HB27).